The chain runs to 252 residues: 2-succinyl-6-hydroxy-2,4-cyclohexadiene-1-carboxylate synthase (252 aa).

It belongs to the AB hydrolase superfamily. MenH family. As to quaternary structure, monomer.

The enzyme catalyses 5-enolpyruvoyl-6-hydroxy-2-succinyl-cyclohex-3-ene-1-carboxylate = (1R,6R)-6-hydroxy-2-succinyl-cyclohexa-2,4-diene-1-carboxylate + pyruvate. Its pathway is quinol/quinone metabolism; 1,4-dihydroxy-2-naphthoate biosynthesis; 1,4-dihydroxy-2-naphthoate from chorismate: step 3/7. The protein operates within quinol/quinone metabolism; menaquinone biosynthesis. Its function is as follows. Catalyzes a proton abstraction reaction that results in 2,5-elimination of pyruvate from 2-succinyl-5-enolpyruvyl-6-hydroxy-3-cyclohexene-1-carboxylate (SEPHCHC) and the formation of 2-succinyl-6-hydroxy-2,4-cyclohexadiene-1-carboxylate (SHCHC). The protein is 2-succinyl-6-hydroxy-2,4-cyclohexadiene-1-carboxylate synthase of Salmonella paratyphi B (strain ATCC BAA-1250 / SPB7).